Consider the following 354-residue polypeptide: MLKKLEVLEDTYKDLSEKIGDPDVINDQKVWQKYIKEHADLEPIVMKYREYKSVLDSIKESKEILQEESDEELRELAKMELAEMEEKVAPLEEEIKILLLPKDPNDDKNVIVEIRGGAGGDEAALFAGDLFRMYSRYAERRRWKIELLSASDTGVGGYKEVSFMIKGKGAYSRLKYESGVHRVQRIPSTESGGRIHTSTSTVAVLPEVEDVEVEINPNDLRIDVFRSSGNGGQSVNTTDSAVRVTHIPTGEVVSCQDGKSQLKNKEQALKILKARLYDKALAEQHKDIAAERKSQVGTGDRSERIRTYNFPQGRISDHRINLTLYKLDAFLDGDIDEMIDALITVDQTEKMTAI.

Glutamine 233 carries the N5-methylglutamine modification.

It belongs to the prokaryotic/mitochondrial release factor family. Post-translationally, methylated by PrmC. Methylation increases the termination efficiency of RF1.

It is found in the cytoplasm. In terms of biological role, peptide chain release factor 1 directs the termination of translation in response to the peptide chain termination codons UAG and UAA. The chain is Peptide chain release factor 1 from Clostridioides difficile (strain 630) (Peptoclostridium difficile).